The chain runs to 537 residues: Periplasmic murein peptide-binding protein MppA (537 aa).

A signal peptide spans 1–22 (MKHSVSVTCCALLVSSISLSYA). Residues Lys42, Val54, Leu56, Gln289, Arg424, Ser435, Val437, Asp439, and Thr506 each contribute to the L-alanyl-gamma-D-glutamyl-meso-2,6-diaminopimelate site.

This sequence belongs to the bacterial solute-binding protein 5 family. In terms of assembly, the complex is composed of two ATP-binding proteins (OppD and OppF), two transmembrane proteins (OppB and OppC) and a solute-binding protein (MppA).

It localises to the periplasm. Part of the ABC transporter complex MppA-OppBCDF involved in the uptake of the cell wall murein tripeptide L-alanyl-gamma-D-glutamyl-meso-diaminopimelate. Is involved in the recycling of cell wall peptides. Binds the cell wall peptide L-Ala-D-Gly-gamma-meso-diaminopimelic acid. Can also transport ordinary alpha-linked tripeptides such as Pro-Phe-Lys, but with much lower efficiency than OppA. Cannot bind typical tripeptides such as Lys-Glu-Lys, Lys-Lys-Lys or Ala-Ala-Ala. In Escherichia coli (strain K12), this protein is Periplasmic murein peptide-binding protein MppA.